Here is a 152-residue protein sequence, read N- to C-terminus: 2-C-methyl-D-erythritol 2,4-cyclodiphosphate synthase (152 aa).

Positions 8 and 10 each coordinate a divalent metal cation. 4-CDP-2-C-methyl-D-erythritol 2-phosphate is bound by residues 8–10 (DSH) and 34–35 (HS). An a divalent metal cation-binding site is contributed by H42. 4-CDP-2-C-methyl-D-erythritol 2-phosphate contacts are provided by residues 56 to 58 (DIG) and 61 to 65 (FPDTD).

The protein belongs to the IspF family. As to quaternary structure, homotrimer. A divalent metal cation serves as cofactor.

The enzyme catalyses 4-CDP-2-C-methyl-D-erythritol 2-phosphate = 2-C-methyl-D-erythritol 2,4-cyclic diphosphate + CMP. It participates in isoprenoid biosynthesis; isopentenyl diphosphate biosynthesis via DXP pathway; isopentenyl diphosphate from 1-deoxy-D-xylulose 5-phosphate: step 4/6. In terms of biological role, involved in the biosynthesis of isopentenyl diphosphate (IPP) and dimethylallyl diphosphate (DMAPP), two major building blocks of isoprenoid compounds. Catalyzes the conversion of 4-diphosphocytidyl-2-C-methyl-D-erythritol 2-phosphate (CDP-ME2P) to 2-C-methyl-D-erythritol 2,4-cyclodiphosphate (ME-CPP) with a corresponding release of cytidine 5-monophosphate (CMP). In Thermus thermophilus (strain ATCC BAA-163 / DSM 7039 / HB27), this protein is 2-C-methyl-D-erythritol 2,4-cyclodiphosphate synthase.